A 280-amino-acid chain; its full sequence is Hydroxyethylthiazole kinase (280 aa).

A substrate-binding site is contributed by methionine 58. Arginine 129 is an ATP binding site. Alanine 206 is a substrate binding site.

The protein belongs to the Thz kinase family. It depends on Mg(2+) as a cofactor.

The catalysed reaction is 5-(2-hydroxyethyl)-4-methylthiazole + ATP = 4-methyl-5-(2-phosphooxyethyl)-thiazole + ADP + H(+). It functions in the pathway cofactor biosynthesis; thiamine diphosphate biosynthesis; 4-methyl-5-(2-phosphoethyl)-thiazole from 5-(2-hydroxyethyl)-4-methylthiazole: step 1/1. In terms of biological role, thiazole kinase involved in thiamine salvage pathway. The chain is Hydroxyethylthiazole kinase (THIM) from Zea mays (Maize).